The sequence spans 161 residues: Nucleotide-binding protein Ajs_2750 (161 aa).

It belongs to the YajQ family.

Functionally, nucleotide-binding protein. This is Nucleotide-binding protein Ajs_2750 from Acidovorax sp. (strain JS42).